The sequence spans 156 residues: ATP synthase subunit b (156 aa).

Residues 7-29 traverse the membrane as a helical segment; that stretch reads LLGQAISFALFVWFCIKFVWPPL.

It belongs to the ATPase B chain family. F-type ATPases have 2 components, F(1) - the catalytic core - and F(0) - the membrane proton channel. F(1) has five subunits: alpha(3), beta(3), gamma(1), delta(1), epsilon(1). F(0) has three main subunits: a(1), b(2) and c(10-14). The alpha and beta chains form an alternating ring which encloses part of the gamma chain. F(1) is attached to F(0) by a central stalk formed by the gamma and epsilon chains, while a peripheral stalk is formed by the delta and b chains.

It is found in the cell inner membrane. Its function is as follows. F(1)F(0) ATP synthase produces ATP from ADP in the presence of a proton or sodium gradient. F-type ATPases consist of two structural domains, F(1) containing the extramembraneous catalytic core and F(0) containing the membrane proton channel, linked together by a central stalk and a peripheral stalk. During catalysis, ATP synthesis in the catalytic domain of F(1) is coupled via a rotary mechanism of the central stalk subunits to proton translocation. Functionally, component of the F(0) channel, it forms part of the peripheral stalk, linking F(1) to F(0). The sequence is that of ATP synthase subunit b from Shewanella sp. (strain W3-18-1).